The primary structure comprises 1249 residues: Clustered mitochondria protein homolog (1249 aa).

A disordered region spans residues 1 to 34 (MAQTNGELEHSKAETPEQLTNGNHPEETQEEEQN). Residues 321–565 (DITRSQENYL…RVTPLDVMWQ (245 aa)) enclose the Clu domain. 2 disordered regions span residues 610–638 (VETA…EALD) and 874–907 (VPAT…PEKP). The segment covering 613 to 638 (ASKEKSEENAESKEEGSEEKSEEALD) has biased composition (basic and acidic residues). TPR repeat units follow at residues 975–1008 (AKLY…TERT), 1017–1050 (ILSY…WKII), and 1059–1092 (ITTM…CESL). Positions 1178 to 1191 (TRTLGTKVQPQVGQ) are enriched in polar residues. The disordered stretch occupies residues 1178 to 1249 (TRTLGTKVQP…KLRGSKKSSA (72 aa)). Over residues 1192–1205 (SAPSASGASSANPS) the composition is skewed to low complexity.

Belongs to the CLU family. In terms of assembly, may associate with the eukaryotic translation initiation factor 3 (eIF-3) complex.

It is found in the cytoplasm. MRNA-binding protein involved in proper cytoplasmic distribution of mitochondria. The chain is Clustered mitochondria protein homolog from Aspergillus oryzae (strain ATCC 42149 / RIB 40) (Yellow koji mold).